We begin with the raw amino-acid sequence, 382 residues long: Calcium/calmodulin-dependent protein kinase (382 aa).

Positions 23 to 278 constitute a Protein kinase domain; sequence YKFGRTLGAG…SKEALGHIWL (256 aa). ATP is bound by residues 29-37 and lysine 50; that span reads LGAGTYGVV. The Proton acceptor role is filled by aspartate 142. A calmodulin-binding region spans residues 291-301; that stretch reads ELEAYRRRARL. Disordered regions lie at residues 318–344 and 359–382; these read KEHEEDPSESDMGDAQGASDNHKGDGS and QKQESLQVEEELEKESRRRSFSNA.

This sequence belongs to the protein kinase superfamily. CAMK Ser/Thr protein kinase family. CaMK subfamily.

The catalysed reaction is L-seryl-[protein] + ATP = O-phospho-L-seryl-[protein] + ADP + H(+). It catalyses the reaction L-threonyl-[protein] + ATP = O-phospho-L-threonyl-[protein] + ADP + H(+). The polypeptide is Calcium/calmodulin-dependent protein kinase (Metarhizium anisopliae (Entomophthora anisopliae)).